We begin with the raw amino-acid sequence, 114 residues long: Large ribosomal subunit protein uL22 (114 aa).

This sequence belongs to the universal ribosomal protein uL22 family. Part of the 50S ribosomal subunit.

Functionally, this protein binds specifically to 23S rRNA; its binding is stimulated by other ribosomal proteins, e.g. L4, L17, and L20. It is important during the early stages of 50S assembly. It makes multiple contacts with different domains of the 23S rRNA in the assembled 50S subunit and ribosome. The globular domain of the protein is located near the polypeptide exit tunnel on the outside of the subunit, while an extended beta-hairpin is found that lines the wall of the exit tunnel in the center of the 70S ribosome. The polypeptide is Large ribosomal subunit protein uL22 (Streptococcus thermophilus (strain CNRZ 1066)).